We begin with the raw amino-acid sequence, 293 residues long: Ribosomal protein L11 methyltransferase (293 aa).

Residues T145, G166, D188, and N230 each coordinate S-adenosyl-L-methionine.

Belongs to the methyltransferase superfamily. PrmA family.

The protein resides in the cytoplasm. The catalysed reaction is L-lysyl-[protein] + 3 S-adenosyl-L-methionine = N(6),N(6),N(6)-trimethyl-L-lysyl-[protein] + 3 S-adenosyl-L-homocysteine + 3 H(+). Methylates ribosomal protein L11. The polypeptide is Ribosomal protein L11 methyltransferase (Shigella sonnei (strain Ss046)).